Here is a 242-residue protein sequence, read N- to C-terminus: Ribosomal RNA small subunit methyltransferase G (242 aa).

S-adenosyl-L-methionine is bound by residues Gly79, 130–131 (VE), and Gln149.

This sequence belongs to the methyltransferase superfamily. RNA methyltransferase RsmG family.

It is found in the cytoplasm. Its function is as follows. Specifically methylates the N7 position of a guanine in 16S rRNA. This chain is Ribosomal RNA small subunit methyltransferase G, found in Mycoplasmoides gallisepticum (strain R(low / passage 15 / clone 2)) (Mycoplasma gallisepticum).